The sequence spans 61 residues: Metallothionein-1 (61 aa).

The residue at position 1 (Met1) is an N-acetylmethionine. The tract at residues Met1–Cys29 is beta. A divalent metal cation is bound by residues Cys5, Cys7, Cys13, Cys15, Cys19, Cys21, Cys24, Cys26, Cys29, Cys33, Cys34, Cys36, Cys37, Cys41, Cys44, Cys48, Cys50, Cys57, Cys59, and Cys60. The interval Lys30 to Ala61 is alpha.

This sequence belongs to the metallothionein superfamily. Type 1 family.

In terms of biological role, metallothioneins have a high content of cysteine residues that bind various heavy metals; these proteins are transcriptionally regulated by both heavy metals and glucocorticoids. The polypeptide is Metallothionein-1 (MT1) (Cricetulus griseus (Chinese hamster)).